Here is a 361-residue protein sequence, read N- to C-terminus: Microtubule-associated protein Jupiter (361 aa).

Residues 1 to 15 (MISNYDITDSKSSSK) show a composition bias toward polar residues. 2 disordered regions span residues 1 to 38 (MISNYDITDSKSSSKVLRPPGGGSSDIFGSDMPQTPRN) and 70 to 99 (IGDNPRRGQKPVDSHSRLFGEPMRPITPGK). At serine 24 the chain carries Phosphoserine. Position 35 is a phosphothreonine (threonine 35). The span at 73 to 87 (NPRRGQKPVDSHSRL) shows a compositional bias: basic and acidic residues. At threonine 96 the chain carries Phosphothreonine. Serine 105 carries the post-translational modification Phosphoserine. Composition is skewed to low complexity over residues 125-134 (GSSTANTTNG) and 141-154 (SGSVSSASSSVSSS). Disordered regions lie at residues 125–165 (GSST…SGSR) and 328–361 (GSTNSGSVGNGDNGGNSVVNKNRVPPGGYSSGLW). Serine 143 and serine 154 each carry phosphoserine. The segment covering 155–165 (TENLKMNSGSR) has biased composition (polar residues).

The protein belongs to the MAP Jupiter family.

The protein localises to the nucleus. It localises to the cytoplasm. Its subcellular location is the cytoskeleton. The protein resides in the spindle. Functionally, binds to all microtubule populations. The protein is Microtubule-associated protein Jupiter of Drosophila persimilis (Fruit fly).